The primary structure comprises 470 residues: Cysteine--tRNA ligase (470 aa).

A Zn(2+)-binding site is contributed by Cys28. A 'HIGH' region motif is present at residues 30–40 (PTVYNYIHIGN). Zn(2+) is bound by residues Cys212, His237, and Glu241. Positions 271–275 (KMSKS) match the 'KMSKS' region motif. Residue Lys274 participates in ATP binding.

It belongs to the class-I aminoacyl-tRNA synthetase family. As to quaternary structure, monomer. The cofactor is Zn(2+).

Its subcellular location is the cytoplasm. The catalysed reaction is tRNA(Cys) + L-cysteine + ATP = L-cysteinyl-tRNA(Cys) + AMP + diphosphate. The chain is Cysteine--tRNA ligase from Limosilactobacillus reuteri (strain DSM 20016) (Lactobacillus reuteri).